We begin with the raw amino-acid sequence, 694 residues long: E3 ubiquitin-protein ligase SPL11 (694 aa).

Positions 1 to 12 are enriched in acidic residues; sequence MAGDRAEEEEGE. 2 disordered regions span residues 1-21 and 343-363; these read MAGDRAEEEEGEAPPPEARAA and NGMEPPKRSTQPNKPTPACSS. The region spanning 272–346 is the U-box domain; sequence TIPDEFRCPI…SQWCETNGME (75 aa). Polar residues predominate over residues 350-363; sequence RSTQPNKPTPACSS. 6 ARM repeats span residues 398-438, 439-479, 480-520, 521-561, 562-602, and 603-650; these read NANN…NLSI, HEDN…SLSV, IDEY…NLCI, YQGN…ILSS, HPEG…HLCS, and GEHH…FLVQ. Positions 650–667 are enriched in low complexity; the sequence is QQQEEQESQSQASAQVPP. The interval 650–694 is disordered; sequence QQQEEQESQSQASAQVPPQATPEQVPENDIPEQLDSPASQYPMVV.

As to quaternary structure, interacts with SPIN1 (via N-terminus). As to expression, highly expressed in leaf, at intermediate levels in shoot and weakly in root.

It is found in the nucleus. The protein resides in the cytoplasm. It catalyses the reaction S-ubiquitinyl-[E2 ubiquitin-conjugating enzyme]-L-cysteine + [acceptor protein]-L-lysine = [E2 ubiquitin-conjugating enzyme]-L-cysteine + N(6)-ubiquitinyl-[acceptor protein]-L-lysine.. Its pathway is protein modification; protein ubiquitination. Functionally, E3 ubiquitin-protein ligase that negatively regulates programmed cell death and disease resistance. Participates in flowering time control by mediating ubiquitination and subsequent proteasomal degradation of SPIN1. The chain is E3 ubiquitin-protein ligase SPL11 (SPL11) from Oryza sativa subsp. japonica (Rice).